Reading from the N-terminus, the 241-residue chain is tRNA pseudouridine synthase B (241 aa).

D45 (nucleophile) is an active-site residue.

This sequence belongs to the pseudouridine synthase TruB family. Type 1 subfamily.

It carries out the reaction uridine(55) in tRNA = pseudouridine(55) in tRNA. Responsible for synthesis of pseudouridine from uracil-55 in the psi GC loop of transfer RNAs. This chain is tRNA pseudouridine synthase B, found in Chlamydia trachomatis serovar L2 (strain ATCC VR-902B / DSM 19102 / 434/Bu).